The primary structure comprises 1802 residues: Transposon Ty4-H Gag-Pol polyprotein (1802 aa).

A coiled-coil region spans residues 39-115 (RKVSIKDEQV…IQLLETNENN (77 aa)). Residues 381 to 501 (NNNLSPVQNE…KTKMVLSRKY (121 aa)) are ty4 protease. Asp414 acts as the For protease activity; shared with dimeric partner in catalysis. The interval 539–599 (AIKPTSSPGF…EPNEFWCQTC (61 aa)) is integrase-type zinc finger-like. Residues 619–786 (TDHEPGSSWC…LPLKAISRQP (168 aa)) form the Integrase catalytic domain. The Mg(2+) site is built by Asp630 and Asp695. Residues 1223–1248 (KRKRKRHDKNNSLTSYELERDKKRSK) form a disordered region. Positions 1375–1510 (RNMFMKTLDI…DILGMDLVYN (136 aa)) constitute a Reverse transcriptase Ty1/copia-type domain. Positions 1383, 1462, 1463, 1644, 1686, and 1720 each coordinate Mg(2+). An RNase H Ty1/copia-type domain is found at 1644–1790 (DASVGSEYDA…KRFIQVLKNK (147 aa)).

As to quaternary structure, the protease is a homodimer, whose active site consists of two apposed aspartic acid residues. Proteolytically processed into capsid protein (CA), Ty4 protease (PR), integrase (IN) and reverse transcriptase/ribonuclease H (RT) proteins. Initially, virus-like particles (VLPs) are composed of the structural unprocessed proteins Gag and Gag-Pol, and also contain the host initiator methionine tRNA (tRNA(i)-Met) which serves as a primer for minus-strand DNA synthesis, and a dimer of genomic Ty RNA. Processing of the polyproteins occurs within the particle and proceeds by an ordered pathway, called maturation. First, the protease (PR) is released by autocatalytic cleavage of the Gag-Pol polyprotein, and this cleavage is a prerequisite for subsequent processing at the remaining sites to release the mature structural and catalytic proteins. Maturation takes place prior to the RT reaction and is required to produce transposition-competent VLPs.

It is found in the cytoplasm. Its subcellular location is the nucleus. The enzyme catalyses DNA(n) + a 2'-deoxyribonucleoside 5'-triphosphate = DNA(n+1) + diphosphate. The catalysed reaction is Endonucleolytic cleavage to 5'-phosphomonoester.. Its function is as follows. Capsid protein (CA) is the structural component of the virus-like particle (VLP), forming the shell that encapsulates the retrotransposons dimeric RNA genome. The aspartyl protease (PR) mediates the proteolytic cleavages of the Gag and Gag-Pol polyproteins after assembly of the VLP. Functionally, reverse transcriptase/ribonuclease H (RT) is a multifunctional enzyme that catalyzes the conversion of the retro-elements RNA genome into dsDNA within the VLP. The enzyme displays a DNA polymerase activity that can copy either DNA or RNA templates, and a ribonuclease H (RNase H) activity that cleaves the RNA strand of RNA-DNA heteroduplexes during plus-strand synthesis and hydrolyzes RNA primers. The conversion leads to a linear dsDNA copy of the retrotransposon that includes long terminal repeats (LTRs) at both ends. In terms of biological role, integrase (IN) targets the VLP to the nucleus, where a subparticle preintegration complex (PIC) containing at least integrase and the newly synthesized dsDNA copy of the retrotransposon must transit the nuclear membrane. Once in the nucleus, integrase performs the integration of the dsDNA into the host genome. This Saccharomyces cerevisiae (strain ATCC 204508 / S288c) (Baker's yeast) protein is Transposon Ty4-H Gag-Pol polyprotein (TY4B-H).